Reading from the N-terminus, the 2453-residue chain is Nuclear receptor corepressor 1 (2453 aa).

Residues 1–29 (MSSSGYPPNQGAFSTEQSRYPSHSVQYTF) show a composition bias toward polar residues. Disordered stretches follow at residues 1-116 (MSSS…QVSD), 147-177 (PAFG…SKLS), and 206-231 (QQQL…VEQK). Positions 1–373 (MSSSGYPPNQ…QRGAGLSATI (373 aa)) are interaction with ZBTB33 and HEXIM1. A compositionally biased stretch (low complexity) spans 51-64 (SQASQLLQQQQQQQ). Basic and acidic residues-rich tracts occupy residues 77-88 (PGSDRPQERRSG) and 99-116 (VDHD…QVSD). The residue at position 172 (Ser-172) is a Phosphoserine. Positions 174-216 (SKLSKEELIQSMDRVDREIAKVEQQILKLKKKQQQLEEEAAKP) form a coiled coil. Positions 212 to 221 (EAAKPPEPEK) are enriched in basic and acidic residues. Ser-224 bears the Phosphoserine mark. The interval 254-312 (FEGLGPKVELPLYNQPSDTKVYHENIKTNQVMRKKLILFFKRRNHARKQREQKICQRYD) is interaction with SIN3A/B. Positions 299–328 (ARKQREQKICQRYDQLMEAWEKKVDRIENN) form a coiled coil. Positions 435 to 486 (QFMNVWTDHEKEIFKDKFIQHPKNFGLIASYLERKSVPDCVLYYYLTKKNEN) constitute an SANT 1 domain. Disordered regions lie at residues 497–631 (KRRG…TEEE) and 677–908 (LLQQ…PERQ). Positions 501–550 (RNQQIARPSQEEKVEEKEEDKAEKTEKKEEEKKDDEEKDDKEDSKETTKE) form a coiled coil. Composition is skewed to basic and acidic residues over residues 509–531 (SQEE…KEEE) and 541–556 (KEDS…RTEA). A compositionally biased stretch (low complexity) spans 592–604 (EAAAANAAAAATE). Residues 605-616 (EPPPPLPPPPEP) show a composition bias toward pro residues. One can recognise an SANT 2 domain in the interval 622–673 (VETSRWTEEEMEVAKKGLVEHGRNWAAIAKMVGTKSEAQCKNFYFNYKRRHN). Residues 697-707 (QCESVASTVSA) show a composition bias toward polar residues. The segment covering 708–727 (QEDEDIEASNEEENPEDSEG) has biased composition (acidic residues). The span at 771 to 787 (TTDPAPCASPSSAVPTT) shows a compositional bias: low complexity. The span at 851-885 (GEGDAKERDLESTSEKTEARDEDVVVAEQIERPEP) shows a compositional bias: basic and acidic residues. The residue at position 1011 (Ser-1011) is a Phosphoserine. A disordered region spans residues 1034 to 1058 (VRLPTTRPTRPPPPLIPSSKTTVAS). A Glycyl lysine isopeptide (Lys-Gly) (interchain with G-Cter in SUMO1); alternate cross-link involves residue Lys-1117. Lys-1117 is covalently cross-linked (Glycyl lysine isopeptide (Lys-Gly) (interchain with G-Cter in SUMO2); alternate). At Ser-1122 the chain carries Phosphoserine. Residue Lys-1195 forms a Glycyl lysine isopeptide (Lys-Gly) (interchain with G-Cter in SUMO2) linkage. Residues Ser-1206, Ser-1207, Ser-1274, Ser-1292, and Ser-1333 each carry the phosphoserine modification. N6-acetyllysine is present on Lys-1347. At Thr-1378 the chain carries Phosphothreonine. A Glycyl lysine isopeptide (Lys-Gly) (interchain with G-Cter in SUMO2) cross-link involves residue Lys-1400. Lys-1423 participates in a covalent cross-link: Glycyl lysine isopeptide (Lys-Gly) (interchain with G-Cter in SUMO2); alternate. Lys-1423 is subject to N6-acetyllysine; alternate. The interval 1450–1544 (GEPVRARHTS…SIPAKSPVPG (95 aa)) is disordered. Residues Ser-1459 and Ser-1481 each carry the phosphoserine modification. Residues 1459–1469 (SVVSSGPSVLR) are compositionally biased toward polar residues. Positions 1495 to 1514 (VSYQNTISRGSPMMNRTSDV) are enriched in polar residues. Residues 1510–2453 (RTSDVSSSKS…QYETLSDSDD (944 aa)) form an interaction with C1D region. Residue Lys-1525 forms a Glycyl lysine isopeptide (Lys-Gly) (interchain with G-Cter in SUMO2) linkage. Ser-1598 is subject to Phosphoserine. Disordered stretches follow at residues 1697–1780 (RPYN…VRTQ) and 1902–1939 (ALPS…RTRG). 2 stretches are compositionally biased toward basic and acidic residues: residues 1718 to 1745 (AERE…RERI) and 1919 to 1937 (AGKD…ELRT). A CORNR box 1 motif is present at residues 1949 to 1953 (IDVII). The disordered stretch occupies residues 1959–2060 (SDKDARERGS…SSQSEGMGQV (102 aa)). Low complexity predominate over residues 1968–1979 (SQSSDSSSSLSS). Phosphoserine occurs at positions 1993 and 1997. The ID1 stretch occupies residues 2050-2129 (PSSQSEGMGQ…QSQTVLHPRP (80 aa)). The segment at 2065–2068 (RLIT) is required for interaction with RARA in the absence of its ligand. The CORNR box 2 signature appears at 2073–2077 (ICQII). A compositionally biased stretch (polar residues) spans 2088 to 2124 (SQASTSTFQTSPSALSSTPVRTKTSSRYSPESQSQTV). Residues 2088 to 2174 (SQASTSTFQT…SPPQGPAVHE (87 aa)) are disordered. Phosphoserine occurs at positions 2116, 2134, 2150, 2165, and 2198. The span at 2138 to 2156 (LVDKSRGSRPGKSPERSHI) shows a compositional bias: basic and acidic residues. Positions 2226–2287 (IFRKLNSSGG…EDIIRKALMG (62 aa)) are ID2. A CORNR box 3 motif is present at residues 2277 to 2281 (LEDII). The tract at residues 2303–2396 (PVGIMPGSAS…RPSSTGSTQF (94 aa)) is disordered. Low complexity predominate over residues 2310 to 2319 (SASTSVVTSS). The residue at position 2412 (Thr-2412) is a Phosphothreonine. Ser-2449 and Ser-2451 each carry phosphoserine.

It belongs to the N-CoR nuclear receptor corepressors family. Forms a large corepressor complex that contains SIN3A/B and histone deacetylases HDAC1 and HDAC2. This complex associates with the thyroid receptor (TR) and the retinoid acid receptor (RAR) in the absence of ligand. Interacts directly with RARA; the interaction is facilitated with RARA trimethylation. Component of the N-Cor repressor complex, at least composed of CBFA2T3, HEXIM1, NCOR1, NCOR2, HDAC3, TBL1X, TBL1XR1, CORO2A and GPS2. Interacts with ZBTB33; the interaction serves to recruit the N-CoR complex to promoter regions containing methylated CpG dinucleotides. Interacts with TRIM28 and KDM3A. Interacts (via the RD1 domain) with BAZ1A (via its N-terminal); the interaction corepresses a number of NCOR1-regulated genes. Interacts with BCL6, C1D, DACH1, HEXIM1, HDAC7, RORA, RORC, SAP30, SIAH2, SIN3A and SIN3B. May interact with DEAF1. Interacts with RXRA. Interacts with SETD5. Interacts with VDR. Interacts with ZBTB7A. Interacts with AR. Interacts with HDAC3. Post-translationally, ubiquitinated; mediated by SIAH2 and leading to its subsequent proteasomal degradation. Ubiquitous.

The protein resides in the nucleus. In terms of biological role, mediates transcriptional repression by certain nuclear receptors. Part of a complex which promotes histone deacetylation and the formation of repressive chromatin structures which may impede the access of basal transcription factors. Participates in the transcriptional repressor activity produced by BCL6. Recruited by ZBTB7A to the androgen response elements/ARE on target genes, negatively regulates androgen receptor signaling and androgen-induced cell proliferation. Mediates the NR1D1-dependent repression and circadian regulation of TSHB expression. The NCOR1-HDAC3 complex regulates the circadian expression of the core clock gene ARTNL/BMAL1 and the genes involved in lipid metabolism in the liver. The sequence is that of Nuclear receptor corepressor 1 (Ncor1) from Mus musculus (Mouse).